A 229-amino-acid polypeptide reads, in one-letter code: Extracellular small neutral protease (229 aa).

The first 28 residues, 1–28, serve as a signal peptide directing secretion; the sequence is MRMPLSVLTAAGLSLATLGLGTAGPASA. A propeptide spanning residues 29-81 is cleaved from the precursor; it reads TPTAEGAPVVAYDGSPSAGSPADAKAEAAANRAFFEAVLRSVAEKRAANPKST. The Ca(2+) site is built by Asp-159 and Thr-161. His-166 contacts Zn(2+). Residue Glu-167 is part of the active site. The Zn(2+) site is built by His-170 and Asp-176. A disulfide bond links Cys-182 and Cys-195.

It belongs to the peptidase M7 family. Monomer. Ca(2+) serves as cofactor. The cofactor is Zn(2+).

It is found in the secreted. The enzyme catalyses Hydrolyzes proteins with a preference for Tyr or Phe in the P1' position. Has no action on amino-acid p-nitroanilides.. Its function is as follows. Milk hydrolyzing. This is Extracellular small neutral protease (snpA) from Streptomyces sp. (strain C5).